Reading from the N-terminus, the 874-residue chain is Alanine--tRNA ligase (874 aa).

Positions 562, 566, 664, and 668 each coordinate Zn(2+).

It belongs to the class-II aminoacyl-tRNA synthetase family. The cofactor is Zn(2+).

The protein resides in the cytoplasm. The enzyme catalyses tRNA(Ala) + L-alanine + ATP = L-alanyl-tRNA(Ala) + AMP + diphosphate. In terms of biological role, catalyzes the attachment of alanine to tRNA(Ala) in a two-step reaction: alanine is first activated by ATP to form Ala-AMP and then transferred to the acceptor end of tRNA(Ala). Also edits incorrectly charged Ser-tRNA(Ala) and Gly-tRNA(Ala) via its editing domain. In Shewanella sp. (strain MR-7), this protein is Alanine--tRNA ligase.